Consider the following 62-residue polypeptide: Small ribosomal subunit protein bS21 (62 aa).

Over residues 43-52 the composition is skewed to basic and acidic residues; the sequence is VKKKLKSEAA. Residues 43–62 are disordered; that stretch reads VKKKLKSEAARKRKNRRRFK. Positions 53–62 are enriched in basic residues; the sequence is RKRKNRRRFK.

This sequence belongs to the bacterial ribosomal protein bS21 family.

The polypeptide is Small ribosomal subunit protein bS21 (Lactiplantibacillus plantarum (strain ATCC BAA-793 / NCIMB 8826 / WCFS1) (Lactobacillus plantarum)).